Reading from the N-terminus, the 435-residue chain is rRNA methyltransferase 3A, mitochondrial (435 aa).

A mitochondrion-targeting transit peptide spans 1 to 42; the sequence is MAALMYNVSRGLVMLGERSLFQRERYQILVNSRRFLRGLRRR. Residues 314-324 show a composition bias toward polar residues; that stretch reads KQLVSGQTENV. A disordered region spans residues 314–351; that stretch reads KQLVSGQTENVSSDDYSESDSDDDDDEEEDEDSLPHVK. The span at 328–345 shows a compositional bias: acidic residues; that stretch reads DYSESDSDDDDDEEEDED. 2 residues coordinate S-adenosyl-L-methionine: glycine 369 and leucine 402.

The protein belongs to the class IV-like SAM-binding methyltransferase superfamily. RNA methyltransferase TrmH family.

It localises to the mitochondrion. The catalysed reaction is a uridine in rRNA + S-adenosyl-L-methionine = a 2'-O-methyluridine in rRNA + S-adenosyl-L-homocysteine + H(+). Functionally, S-adenosyl-L-methionine-dependent 2'-O-ribose methyltransferase that catalyzes the formation of 2'-O-methylguanosine at position 1485 (Gm1485) in the mitochondrial large subunit ribosomal RNA (mtLSU rRNA), a conserved modification in the peptidyl transferase domain of the mtLSU rRNA. Also required for formation of 2'-O-methyluridine at position 1484 (Um1484) mediated by MRM2. In Danio rerio (Zebrafish), this protein is rRNA methyltransferase 3A, mitochondrial (mrm3a).